We begin with the raw amino-acid sequence, 22 residues long: 5-methyltetrahydropteroyltriglutamate--homocysteine methyltransferase (22 aa).

Belongs to the vitamin-B12 independent methionine synthase family. Requires Zn(2+) as cofactor.

The protein localises to the cytoplasm. The catalysed reaction is 5-methyltetrahydropteroyltri-L-glutamate + L-homocysteine = tetrahydropteroyltri-L-glutamate + L-methionine. Its pathway is amino-acid biosynthesis; L-methionine biosynthesis via de novo pathway; L-methionine from L-homocysteine (MetE route): step 1/1. Catalyzes the transfer of a methyl group from 5-methyltetrahydrofolate to homocysteine resulting in methionine formation. This chain is 5-methyltetrahydropteroyltriglutamate--homocysteine methyltransferase, found in Pseudotsuga menziesii (Douglas-fir).